We begin with the raw amino-acid sequence, 353 residues long: Pupal cuticle protein PCP52 (353 aa).

The first 15 residues, 1 to 15, serve as a signal peptide directing secretion; that stretch reads MRVLILSAFIACATA. The interval 166–195 is disordered; sequence AEAPEGNKDEGNKDSVQVESSATESESDKA. Over residues 179 to 189 the composition is skewed to polar residues; sequence DSVQVESSATE.

In terms of biological role, component of the cuticle of the pupa of Galleria mellonella. This chain is Pupal cuticle protein PCP52 (PCP52), found in Galleria mellonella (Greater wax moth).